The following is a 380-amino-acid chain: MTTPIRFELIKTCRQTGARLGILHTPHGSFETPMFMPVGTLATVKTLSPEELKEMGAGVILSNTYHLWLRPGHDIVAEAGGLHAFMNWDRGILTDSGGFQVFSLSEFRRIEEEGVYFRNHLNGDKLFLSPEKATEIQNALGADIIMAFDECPPYPATYDYMKRSVERTSRWAERCLKAHRRSNEQGLFGIVQGGEYEDLRRQSARDLVSLDFPGYAVGGLSVGEPKDVMNRVLEFTTPLLPTDKPRYLMGVGSPDSLIDGAIRGIDMFDCVLPTRIGRNGTVMTSEGRVVIKNAQYARDFTPLDPNCDCYTCRNYTRAYIRHLIKCDETFGIRLTSYHNVYFLIKLMEQVRQAIREDRLADFREEFFERYGFNKPNAKNF.

Residue Asp95 is the Proton acceptor of the active site. Substrate contacts are provided by residues 95 to 99 (DSGGF), Asp149, Gln192, and Gly219. The segment at 250-256 (GVGSPDS) is RNA binding. The active-site Nucleophile is Asp269. The RNA binding; important for wobble base 34 recognition stretch occupies residues 274–278 (TRIGR). Residues Cys307, Cys309, Cys312, and His338 each contribute to the Zn(2+) site.

It belongs to the queuine tRNA-ribosyltransferase family. As to quaternary structure, homodimer. Within each dimer, one monomer is responsible for RNA recognition and catalysis, while the other monomer binds to the replacement base PreQ1. Zn(2+) is required as a cofactor.

The enzyme catalyses 7-aminomethyl-7-carbaguanine + guanosine(34) in tRNA = 7-aminomethyl-7-carbaguanosine(34) in tRNA + guanine. It participates in tRNA modification; tRNA-queuosine biosynthesis. In terms of biological role, catalyzes the base-exchange of a guanine (G) residue with the queuine precursor 7-aminomethyl-7-deazaguanine (PreQ1) at position 34 (anticodon wobble position) in tRNAs with GU(N) anticodons (tRNA-Asp, -Asn, -His and -Tyr). Catalysis occurs through a double-displacement mechanism. The nucleophile active site attacks the C1' of nucleotide 34 to detach the guanine base from the RNA, forming a covalent enzyme-RNA intermediate. The proton acceptor active site deprotonates the incoming PreQ1, allowing a nucleophilic attack on the C1' of the ribose to form the product. After dissociation, two additional enzymatic reactions on the tRNA convert PreQ1 to queuine (Q), resulting in the hypermodified nucleoside queuosine (7-(((4,5-cis-dihydroxy-2-cyclopenten-1-yl)amino)methyl)-7-deazaguanosine). The chain is Queuine tRNA-ribosyltransferase from Geobacillus thermodenitrificans (strain NG80-2).